The primary structure comprises 635 residues: ATP-binding protein Uup (635 aa).

ABC transporter domains are found at residues 1–253 (MSLI…RVEE) and 320–546 (FEME…KTEE). ATP is bound by residues 36-43 (GRNGAGKS) and 352-359 (GPNGCGKT). Residues 551–635 (KAETVKRSSS…EYLEALKNGG (85 aa)) are C-terminal domain (CTD), binds DNA, required to complement a deletion mutant. Residues 563-631 (SYKLQRELEQ…FERWEYLEAL (69 aa)) adopt a coiled-coil conformation.

The protein belongs to the ABC transporter superfamily. ABCF family. Uup subfamily.

The protein resides in the cytoplasm. The enzyme catalyses ATP + H2O = ADP + phosphate + H(+). Its activity is regulated as follows. ATPase activity inhibited by N-ethylmaleimide but not by vanadate. Its function is as follows. Probably plays a role in ribosome assembly or function; overexpression suppresses cold-sensitive growth of a bipA deletion. May be involved in resolution of branched DNA intermediates that result from template switching in postreplication gaps. Binds DNA at Holliday junctions. May be involved in the correct segregation of nucleoids. Has ATPase activity, binds DNA non-sequence specifically; the presence of DNA does not change the ATPase activity. Mutations in this gene cause an increase in RecA-independent precise excision of transposons and insertion elements, and also reduce bacteriophage Mu growth. Genetic interactions among priB, dam, lexA, nagC, polA, rdgB, rdgB, rep and uup link the PriA-PriB replication restart pathway to DNA double-strand break repair. This chain is ATP-binding protein Uup, found in Escherichia coli (strain K12).